Consider the following 353-residue polypeptide: Photosystem II protein D1 (353 aa).

Thr2 carries the N-acetylthreonine modification. Phosphothreonine is present on Thr2. The next 3 helical transmembrane spans lie at 29–46 (YIGWFGVLMIPTLLTATS), 118–133 (HFLLGVACYMGREWEL), and 142–156 (WIAVAYSAPVAAAAA). His118 contacts chlorophyll a. Tyr126 is a binding site for pheophytin a. [CaMn4O5] cluster-binding residues include Asp170 and Glu189. Residues 197-218 (FHMLGVAGVFGGSLFSAMHGSL) form a helical membrane-spanning segment. A chlorophyll a-binding site is contributed by His198. Residues His215 and 264–265 (SF) each bind a quinone. His215 provides a ligand contact to Fe cation. Position 272 (His272) interacts with Fe cation. A helical membrane pass occupies residues 274–288 (FLAAWPVVGIWFTAL). His332, Glu333, Asp342, and Ala344 together coordinate [CaMn4O5] cluster. Positions 345–353 (SVDAPSING) are excised as a propeptide.

The protein belongs to the reaction center PufL/M/PsbA/D family. As to quaternary structure, PSII is composed of 1 copy each of membrane proteins PsbA, PsbB, PsbC, PsbD, PsbE, PsbF, PsbH, PsbI, PsbJ, PsbK, PsbL, PsbM, PsbT, PsbX, PsbY, PsbZ, Psb30/Ycf12, at least 3 peripheral proteins of the oxygen-evolving complex and a large number of cofactors. It forms dimeric complexes. The cofactor is The D1/D2 heterodimer binds P680, chlorophylls that are the primary electron donor of PSII, and subsequent electron acceptors. It shares a non-heme iron and each subunit binds pheophytin, quinone, additional chlorophylls, carotenoids and lipids. D1 provides most of the ligands for the Mn4-Ca-O5 cluster of the oxygen-evolving complex (OEC). There is also a Cl(-1) ion associated with D1 and D2, which is required for oxygen evolution. The PSII complex binds additional chlorophylls, carotenoids and specific lipids.. Tyr-161 forms a radical intermediate that is referred to as redox-active TyrZ, YZ or Y-Z. In terms of processing, C-terminally processed by CTPA; processing is essential to allow assembly of the oxygen-evolving complex and thus photosynthetic growth.

It localises to the plastid. Its subcellular location is the chloroplast thylakoid membrane. The enzyme catalyses 2 a plastoquinone + 4 hnu + 2 H2O = 2 a plastoquinol + O2. In terms of biological role, photosystem II (PSII) is a light-driven water:plastoquinone oxidoreductase that uses light energy to abstract electrons from H(2)O, generating O(2) and a proton gradient subsequently used for ATP formation. It consists of a core antenna complex that captures photons, and an electron transfer chain that converts photonic excitation into a charge separation. The D1/D2 (PsbA/PsbD) reaction center heterodimer binds P680, the primary electron donor of PSII as well as several subsequent electron acceptors. This Adiantum capillus-veneris (Maidenhair fern) protein is Photosystem II protein D1.